Here is a 418-residue protein sequence, read N- to C-terminus: Tyrosine--tRNA ligase (418 aa).

An L-tyrosine-binding site is contributed by Tyr39. The 'HIGH' region motif lies at 44–53 (CTAASLHVGH). Residues Tyr176 and Gln180 each contribute to the L-tyrosine site. A 'KMSKS' region motif is present at residues 236 to 240 (KMGKT). Lys239 is a binding site for ATP. One can recognise an S4 RNA-binding domain in the interval 350–418 (IGVLVAFAEK…KKKHVLLRLA (69 aa)).

Belongs to the class-I aminoacyl-tRNA synthetase family. TyrS type 1 subfamily. In terms of assembly, homodimer.

It is found in the cytoplasm. The catalysed reaction is tRNA(Tyr) + L-tyrosine + ATP = L-tyrosyl-tRNA(Tyr) + AMP + diphosphate + H(+). Functionally, catalyzes the attachment of tyrosine to tRNA(Tyr) in a two-step reaction: tyrosine is first activated by ATP to form Tyr-AMP and then transferred to the acceptor end of tRNA(Tyr). The chain is Tyrosine--tRNA ligase from Rhodopseudomonas palustris (strain ATCC BAA-98 / CGA009).